Reading from the N-terminus, the 30-residue chain is L-amino-acid oxidase (30 aa).

This sequence belongs to the flavin monoamine oxidase family. FIG1 subfamily. As to quaternary structure, monomer. This is in contrast with most of its orthologs, that are non-covalently linked homodimers. It depends on FAD as a cofactor. In terms of processing, N-glycosylated. Expressed by the venom gland.

The protein resides in the secreted. The enzyme catalyses an L-alpha-amino acid + O2 + H2O = a 2-oxocarboxylate + H2O2 + NH4(+). The catalysed reaction is L-leucine + O2 + H2O = 4-methyl-2-oxopentanoate + H2O2 + NH4(+). It catalyses the reaction L-phenylalanine + O2 + H2O = 3-phenylpyruvate + H2O2 + NH4(+). It carries out the reaction L-tryptophan + O2 + H2O = indole-3-pyruvate + H2O2 + NH4(+). The enzyme catalyses L-methionine + O2 + H2O = 4-methylsulfanyl-2-oxobutanoate + H2O2 + NH4(+). The catalysed reaction is L-2-aminohexanoate + O2 + H2O = 2-oxohexanoate + H2O2 + NH4(+). It catalyses the reaction L-tyrosine + O2 + H2O = 3-(4-hydroxyphenyl)pyruvate + H2O2 + NH4(+). Its function is as follows. Catalyzes an oxidative deamination of predominantly hydrophobic and aromatic L-amino acids, thus producing hydrogen peroxide that may contribute to the diverse toxic effects of this enzyme. Is highly active against L-Met, L-Leu, L-norleucine (L-2-aminohexanoate), L-Trp, L-Phe, moderately active against L-Tyr, and no active on L-Gly, L-Ala, L-Val, L-Pro, L-His, L-Lys, L-Arg, L-Asp, L-Asn, L-Gln, L-Glu, L-Ser, and L-Thr. Exhibits diverse biological activities, such as hemorrhage, hemolysis, edema, antibacterial and antiparasitic activities. In addition, this protein induces apoptosis. It also interacts with endothelial cells, and inhibits collagen- and ADP-induced platelet aggregation. L-LAAO family effects on platelets are controversial, since it either induces aggregation or inhibits agonist-induced aggregation. These different effects are probably due to different experimental conditions. In Bothrops leucurus (Whitetail lancehead), this protein is L-amino-acid oxidase.